The primary structure comprises 706 residues: Polyribonucleotide nucleotidyltransferase (706 aa).

Mg(2+) is bound by residues Asp487 and Asp493. The 60-residue stretch at 553 to 612 folds into the KH domain; it reads PRLFTMKISQDKIRDVIGKGGETIRSITAETGTEINIAEDGTITIAATTQEAGDAAKKRI. The S1 motif domain occupies 622-692; it reads GKVYEGTVVK…DRGRVRLSIK (71 aa).

It belongs to the polyribonucleotide nucleotidyltransferase family. Mg(2+) serves as cofactor.

The protein localises to the cytoplasm. It carries out the reaction RNA(n+1) + phosphate = RNA(n) + a ribonucleoside 5'-diphosphate. In terms of biological role, involved in mRNA degradation. Catalyzes the phosphorolysis of single-stranded polyribonucleotides processively in the 3'- to 5'-direction. This Neisseria gonorrhoeae (strain ATCC 700825 / FA 1090) protein is Polyribonucleotide nucleotidyltransferase.